We begin with the raw amino-acid sequence, 456 residues long: Phosphomethylpyrimidine synthase (456 aa).

Substrate contacts are provided by residues Asn-80, Met-109, Tyr-139, His-175, 195 to 197, 236 to 239, and Glu-275; these read SRG and DSLR. Zn(2+) is bound at residue His-279. Substrate is bound at residue Tyr-302. Position 343 (His-343) interacts with Zn(2+). 3 residues coordinate [4Fe-4S] cluster: Cys-423, Cys-426, and Cys-431.

The protein belongs to the ThiC family. The cofactor is [4Fe-4S] cluster.

It catalyses the reaction 5-amino-1-(5-phospho-beta-D-ribosyl)imidazole + S-adenosyl-L-methionine = 4-amino-2-methyl-5-(phosphooxymethyl)pyrimidine + CO + 5'-deoxyadenosine + formate + L-methionine + 3 H(+). Its pathway is cofactor biosynthesis; thiamine diphosphate biosynthesis. Catalyzes the synthesis of the hydroxymethylpyrimidine phosphate (HMP-P) moiety of thiamine from aminoimidazole ribotide (AIR) in a radical S-adenosyl-L-methionine (SAM)-dependent reaction. The chain is Phosphomethylpyrimidine synthase from Prochlorococcus marinus (strain MIT 9515).